A 284-amino-acid polypeptide reads, in one-letter code: D-tagatose-1,6-bisphosphate aldolase subunit GatY (284 aa).

Aspartate 82 functions as the Proton donor in the catalytic mechanism. The Zn(2+) site is built by histidine 83 and histidine 180. Glycine 181 is a binding site for dihydroxyacetone phosphate. Zn(2+) is bound at residue histidine 208. Dihydroxyacetone phosphate contacts are provided by residues 209–211 and 230–233; these read GAS and NVAT.

It belongs to the class II fructose-bisphosphate aldolase family. TagBP aldolase GatY subfamily. As to quaternary structure, forms a complex with GatZ. Zn(2+) serves as cofactor.

The catalysed reaction is D-tagatofuranose 1,6-bisphosphate = D-glyceraldehyde 3-phosphate + dihydroxyacetone phosphate. It participates in carbohydrate metabolism; D-tagatose 6-phosphate degradation; D-glyceraldehyde 3-phosphate and glycerone phosphate from D-tagatose 6-phosphate: step 2/2. Functionally, catalytic subunit of the tagatose-1,6-bisphosphate aldolase GatYZ, which catalyzes the reversible aldol condensation of dihydroxyacetone phosphate (DHAP or glycerone-phosphate) with glyceraldehyde 3-phosphate (G3P) to produce tagatose 1,6-bisphosphate (TBP). Requires GatZ subunit for full activity and stability. Is involved in the catabolism of galactitol. The protein is D-tagatose-1,6-bisphosphate aldolase subunit GatY of Shigella flexneri serotype 5b (strain 8401).